Reading from the N-terminus, the 189-residue chain is Auxin-responsive protein IAA6 (189 aa).

The short motif at 13–17 (LRLGL) is the EAR-like (transcriptional repression) element. Residues 93–178 (IGYVKVSMDG…SCKRLRIVKR (86 aa)) enclose the PB1 domain.

It belongs to the Aux/IAA family. As to quaternary structure, homodimers and heterodimers. Interacts with TPL. As to expression, highly expressed in stems and flowers.

It localises to the nucleus. Its function is as follows. Aux/IAA proteins are short-lived transcriptional factors that function as repressors of early auxin response genes at low auxin concentrations. Repression is thought to result from the interaction with auxin response factors (ARFs), proteins that bind to the auxin-responsive promoter element (AuxRE). Formation of heterodimers with ARF proteins may alter their ability to modulate early auxin response genes expression. This is Auxin-responsive protein IAA6 (IAA6) from Arabidopsis thaliana (Mouse-ear cress).